A 1075-amino-acid polypeptide reads, in one-letter code: Carbamoyl phosphate synthase large chain (1075 aa).

The interval Met1–Glu403 is carboxyphosphate synthetic domain. 12 residues coordinate ATP: Arg129, Arg169, Gly175, Gly176, Gln208, Val210, Glu215, Gly241, Val242, His243, Gln285, and Glu299. One can recognise an ATP-grasp 1 domain in the interval Lys133–Val328. Mg(2+) is bound by residues Gln285, Glu299, and Asn301. 3 residues coordinate Mn(2+): Gln285, Glu299, and Asn301. Residues Ile404–Ala548 are oligomerization domain. The tract at residues Lys549–Gly930 is carbamoyl phosphate synthetic domain. Positions Gln673–Ala864 constitute an ATP-grasp 2 domain. Residues Arg709, His748, Leu750, Glu755, Gly780, Ile781, His782, Ser783, Gln823, and Glu835 each coordinate ATP. Mg(2+)-binding residues include Gln823, Glu835, and Asn837. Residues Gln823, Glu835, and Asn837 each coordinate Mn(2+). An MGS-like domain is found at Glu931 to Ala1070. The allosteric domain stretch occupies residues Glu931–Arg1075.

Belongs to the CarB family. As to quaternary structure, composed of two chains; the small (or glutamine) chain promotes the hydrolysis of glutamine to ammonia, which is used by the large (or ammonia) chain to synthesize carbamoyl phosphate. Tetramer of heterodimers (alpha,beta)4. Requires Mg(2+) as cofactor. It depends on Mn(2+) as a cofactor.

The enzyme catalyses hydrogencarbonate + L-glutamine + 2 ATP + H2O = carbamoyl phosphate + L-glutamate + 2 ADP + phosphate + 2 H(+). It catalyses the reaction hydrogencarbonate + NH4(+) + 2 ATP = carbamoyl phosphate + 2 ADP + phosphate + 2 H(+). Its pathway is amino-acid biosynthesis; L-arginine biosynthesis; carbamoyl phosphate from bicarbonate: step 1/1. It functions in the pathway pyrimidine metabolism; UMP biosynthesis via de novo pathway; (S)-dihydroorotate from bicarbonate: step 1/3. In terms of biological role, large subunit of the glutamine-dependent carbamoyl phosphate synthetase (CPSase). CPSase catalyzes the formation of carbamoyl phosphate from the ammonia moiety of glutamine, carbonate, and phosphate donated by ATP, constituting the first step of 2 biosynthetic pathways, one leading to arginine and/or urea and the other to pyrimidine nucleotides. The large subunit (synthetase) binds the substrates ammonia (free or transferred from glutamine from the small subunit), hydrogencarbonate and ATP and carries out an ATP-coupled ligase reaction, activating hydrogencarbonate by forming carboxy phosphate which reacts with ammonia to form carbamoyl phosphate. This Haemophilus ducreyi (strain 35000HP / ATCC 700724) protein is Carbamoyl phosphate synthase large chain.